The primary structure comprises 374 residues: Flagellar P-ring protein (374 aa).

A signal peptide spans 1-29 (MSGLGFTGVVRIAVMALLALAFLGAPAHA). Residues 296–311 (ESPQVSQPNPLSNGRT) are compositionally biased toward polar residues. The disordered stretch occupies residues 296 to 316 (ESPQVSQPNPLSNGRTVMTPR).

The protein belongs to the FlgI family. As to quaternary structure, the basal body constitutes a major portion of the flagellar organelle and consists of four rings (L,P,S, and M) mounted on a central rod.

It localises to the periplasm. Its subcellular location is the bacterial flagellum basal body. Functionally, assembles around the rod to form the L-ring and probably protects the motor/basal body from shearing forces during rotation. This is Flagellar P-ring protein from Nitrobacter winogradskyi (strain ATCC 25391 / DSM 10237 / CIP 104748 / NCIMB 11846 / Nb-255).